The sequence spans 214 residues: Methyltransferase HEMK2 (214 aa).

S-adenosyl-L-homocysteine is bound by residues threonine 29, glutamate 51, glycine 53, aspartate 77, aspartate 103, leucine 104, and asparagine 122. Positions 29, 51, 53, 77, 103, 104, and 122 each coordinate S-adenosyl-L-methionine. An a protein-binding site is contributed by asparagine 122.

This sequence belongs to the eukaryotic/archaeal PrmC-related family. Heterodimer; heterodimerization with TRMT112 is required for S-adenosyl-L-methionine-binding. In terms of assembly, does not interact with TRMT112. In terms of processing, ubiquitinated, leading to its degradation by the proteasome. In terms of tissue distribution, widely expressed, with highest expression in parathyroid and pituitary glands, followed by adrenal gland and kidney, and lowest expression in leukocytes and mammary gland.

The protein localises to the nucleus. It carries out the reaction L-lysyl-[histone] + S-adenosyl-L-methionine = N(6)-methyl-L-lysyl-[histone] + S-adenosyl-L-homocysteine + H(+). It catalyses the reaction L-glutaminyl-[protein] + S-adenosyl-L-methionine = N(5)-methyl-L-glutaminyl-[protein] + S-adenosyl-L-homocysteine + H(+). The enzyme catalyses methylarsonous acid + S-adenosyl-L-methionine = dimethylarsinate + S-adenosyl-L-homocysteine + 2 H(+). In terms of biological role, methyltransferase that can methylate proteins and, to a lower extent, arsenic. Catalytic subunit of a heterodimer with TRMT112, which monomethylates 'Lys-12' of histone H4 (H4K12me1), a modification present at the promoters of numerous genes encoding cell cycle regulators. Catalytic subunit of a heterodimer with TRMT112, which catalyzes N5-methylation of Glu residue of proteins with a Gly-Gln-Xaa-Xaa-Xaa-Arg motif. Methylates ETF1 on 'Gln-185'; ETF1 needs to be complexed to ERF3 in its GTP-bound form to be efficiently methylated. May also play a role in the modulation of arsenic-induced toxicity by mediating the conversion of monomethylarsonous acid (3+) into the less toxic dimethylarsonic acid. It however only plays a limited role in arsenic metabolism compared with AS3MT. The polypeptide is Methyltransferase HEMK2 (Homo sapiens (Human)).